Here is a 340-residue protein sequence, read N- to C-terminus: N-acetyl-gamma-glutamyl-phosphate reductase (340 aa).

Residue Cys146 is part of the active site.

This sequence belongs to the NAGSA dehydrogenase family. Type 1 subfamily.

Its subcellular location is the cytoplasm. It catalyses the reaction N-acetyl-L-glutamate 5-semialdehyde + phosphate + NADP(+) = N-acetyl-L-glutamyl 5-phosphate + NADPH + H(+). It participates in amino-acid biosynthesis; L-arginine biosynthesis; N(2)-acetyl-L-ornithine from L-glutamate: step 3/4. Its function is as follows. Catalyzes the NADPH-dependent reduction of N-acetyl-5-glutamyl phosphate to yield N-acetyl-L-glutamate 5-semialdehyde. This Rubrobacter xylanophilus (strain DSM 9941 / JCM 11954 / NBRC 16129 / PRD-1) protein is N-acetyl-gamma-glutamyl-phosphate reductase.